Consider the following 747-residue polypeptide: Protein Niban 2 (747 aa).

Glycine 2 carries the N-myristoyl glycine lipid modification. A PH domain is found at 68-192 (RIIFSGNLFQ…WQAVLQDCVR (125 aa)). Phosphoserine occurs at positions 568 and 574. The interval 589–747 (WGEQYGDGGD…EDSAGVQTEF (159 aa)) is disordered. Gly residues predominate over residues 593–602 (YGDGGDGSDS). Residues serine 605, serine 626, serine 641, serine 645, serine 648, serine 667, serine 672, serine 683, serine 693, and serine 697 each carry the phosphoserine modification. Over residues 708–722 (VDLEPPKPSDQETGE) the composition is skewed to basic and acidic residues. Over residues 734–747 (HTTTEDSAGVQTEF) the composition is skewed to polar residues.

It belongs to the Niban family. In terms of processing, as apoptosis proceeds, degraded via an proteasome-independent pathway, probably by caspases.

It is found in the cytoplasm. Its subcellular location is the cytosol. The protein resides in the cell junction. The protein localises to the adherens junction. It localises to the membrane. Functionally, may play a role in apoptosis suppression. The sequence is that of Protein Niban 2 from Rattus norvegicus (Rat).